Reading from the N-terminus, the 621-residue chain is Cryptochrome-1 (621 aa).

Residues 3-132 (VNAVHWFRKG…EVIVRISHTL (130 aa)) enclose the Photolyase/cryptochrome alpha/beta domain. 3 consecutive short sequence motifs (LIR) follow at residues 50–54 (NRWRF), 82–87 (DVFPRL), and 151–156 (KRFQTL). Serine 252 lines the FAD pocket. 4 short sequence motifs (LIR) span residues 255 to 260 (LRFGCL), 271 to 276 (DLYKKV), 285 to 290 (SLYGQL), and 335 to 339 (TGFPW). Glutamine 289 is an FAD binding site. Position 355 (histidine 355) interacts with FAD. Positions 379 to 384 (KVFEEL) match the LIR 8 motif. Position 387-389 (387-389 (DAD)) interacts with FAD. 5 short sequence motifs (LIR) span residues 395-400 (GSWMWL), 411-416 (HCYCPV), 430-435 (RRYLPV), 486-491 (QIYQQL), and 492-497 (SRYRGL). Residues 581–621 (QSHLMQPGRASLGTGISAGKRPNPEEETQSVGPKVQRQSTN) form a disordered region.

This sequence belongs to the DNA photolyase class-1 family. Component of the circadian core oscillator, which includes the CRY proteins, CLOCK or NPAS2, BMAL1 or BMAL2, CSNK1E, and the PER proteins. Requires FAD as cofactor. The cofactor is (6R)-5,10-methylene-5,6,7,8-tetrahydrofolate. Expressed in the pineal gland.

Its subcellular location is the cytoplasm. The protein resides in the nucleus. Functionally, transcriptional repressor which forms a core component of the circadian clock. The circadian clock, an internal time-keeping system, regulates various physiological processes through the generation of approximately 24 hour circadian rhythms in gene expression, which are translated into rhythms in metabolism and behavior. It is derived from the Latin roots 'circa' (about) and 'diem' (day) and acts as an important regulator of a wide array of physiological functions including metabolism, sleep, body temperature, blood pressure, endocrine, immune, cardiovascular, and renal function. Consists of two major components: the central clock, residing in the suprachiasmatic nucleus (SCN) of the brain, and the peripheral clocks that are present in nearly every tissue and organ system. Both the central and peripheral clocks can be reset by environmental cues, also known as Zeitgebers (German for 'timegivers'). The predominant Zeitgeber for the central clock is light, which is sensed by retina and signals directly to the SCN. The central clock entrains the peripheral clocks through neuronal and hormonal signals, body temperature and feeding-related cues, aligning all clocks with the external light/dark cycle. Circadian rhythms allow an organism to achieve temporal homeostasis with its environment at the molecular level by regulating gene expression to create a peak of protein expression once every 24 hours to control when a particular physiological process is most active with respect to the solar day. Transcription and translation of core clock components (CLOCK, NPAS2, BMAL1, BMAL2, PER1, PER2, PER3, CRY1 and CRY2) plays a critical role in rhythm generation, whereas delays imposed by post-translational modifications (PTMs) are important for determining the period (tau) of the rhythms (tau refers to the period of a rhythm and is the length, in time, of one complete cycle). A diurnal rhythm is synchronized with the day/night cycle, while the ultradian and infradian rhythms have a period shorter and longer than 24 hours, respectively. Disruptions in the circadian rhythms contribute to the pathology of cardiovascular diseases, cancer, metabolic syndromes and aging. A transcription/translation feedback loop (TTFL) forms the core of the molecular circadian clock mechanism. Transcription factors, CLOCK or NPAS2 and BMAL1 or BMAL2, form the positive limb of the feedback loop, act in the form of a heterodimer and activate the transcription of core clock genes and clock-controlled genes (involved in key metabolic processes), harboring E-box elements (5'-CACGTG-3') within their promoters. The core clock genes: PER1/2/3 and CRY1/2 which are transcriptional repressors form the negative limb of the feedback loop and interact with the CLOCK|NPAS2-BMAL1|BMAL2 heterodimer inhibiting its activity and thereby negatively regulating their own expression. This heterodimer also activates nuclear receptors NR1D1/2 and RORA/B/G, which form a second feedback loop and which activate and repress BMAL1 transcription, respectively. CRY1 and CRY2 have redundant functions but also differential and selective contributions at least in defining the pace of the SCN circadian clock and its circadian transcriptional outputs. More potent transcriptional repressor in cerebellum and liver than CRY2, though more effective in lengthening the period of the SCN oscillator. On its side, CRY2 seems to play a critical role in tuning SCN circadian period by opposing the action of CRY1. With CRY2, is dispensable for circadian rhythm generation but necessary for the development of intercellular networks for rhythm synchrony. Capable of translocating circadian clock core proteins such as PER proteins to the nucleus. Interacts with CLOCK-BMAL1 independently of PER proteins and is found at CLOCK-BMAL1-bound sites, suggesting that CRY may act as a molecular gatekeeper to maintain CLOCK-BMAL1 in a poised and repressed state until the proper time for transcriptional activation. Represses CLOCK-BMAL1-mediated transcriptional activation. The polypeptide is Cryptochrome-1 (CRY1) (Gallus gallus (Chicken)).